A 204-amino-acid polypeptide reads, in one-letter code: Holliday junction branch migration complex subunit RuvA (204 aa).

The domain I stretch occupies residues methionine 1–arginine 64. The interval threonine 65 to proline 143 is domain II. A flexible linker region spans residues alanine 144–glutamate 153. The interval glutamate 153–glycine 204 is domain III.

This sequence belongs to the RuvA family. In terms of assembly, homotetramer. Forms an RuvA(8)-RuvB(12)-Holliday junction (HJ) complex. HJ DNA is sandwiched between 2 RuvA tetramers; dsDNA enters through RuvA and exits via RuvB. An RuvB hexamer assembles on each DNA strand where it exits the tetramer. Each RuvB hexamer is contacted by two RuvA subunits (via domain III) on 2 adjacent RuvB subunits; this complex drives branch migration. In the full resolvosome a probable DNA-RuvA(4)-RuvB(12)-RuvC(2) complex forms which resolves the HJ.

It is found in the cytoplasm. The RuvA-RuvB-RuvC complex processes Holliday junction (HJ) DNA during genetic recombination and DNA repair, while the RuvA-RuvB complex plays an important role in the rescue of blocked DNA replication forks via replication fork reversal (RFR). RuvA specifically binds to HJ cruciform DNA, conferring on it an open structure. The RuvB hexamer acts as an ATP-dependent pump, pulling dsDNA into and through the RuvAB complex. HJ branch migration allows RuvC to scan DNA until it finds its consensus sequence, where it cleaves and resolves the cruciform DNA. The sequence is that of Holliday junction branch migration complex subunit RuvA from Halorhodospira halophila (strain DSM 244 / SL1) (Ectothiorhodospira halophila (strain DSM 244 / SL1)).